A 362-amino-acid polypeptide reads, in one-letter code: Isopentenyl-diphosphate delta-isomerase (362 aa).

5-6 contributes to the substrate binding site; it reads RK. Residues 63-65, Ser-93, and Asn-122 contribute to the FMN site; that span reads AMT. A substrate-binding site is contributed by Gln-152. Glu-153 contacts Mg(2+). Residues Lys-184, Thr-214, 259–261, and 280–281 contribute to the FMN site; these read GIR and AG.

It belongs to the IPP isomerase type 2 family. As to quaternary structure, homooctamer. Dimer of tetramers. FMN is required as a cofactor. It depends on NADPH as a cofactor. Requires Mg(2+) as cofactor.

The protein localises to the cytoplasm. It carries out the reaction isopentenyl diphosphate = dimethylallyl diphosphate. Involved in the biosynthesis of isoprenoids. Catalyzes the 1,3-allylic rearrangement of the homoallylic substrate isopentenyl (IPP) to its allylic isomer, dimethylallyl diphosphate (DMAPP). The sequence is that of Isopentenyl-diphosphate delta-isomerase from Nocardia farcinica (strain IFM 10152).